The sequence spans 478 residues: Aspartyl/glutamyl-tRNA(Asn/Gln) amidotransferase subunit B (478 aa).

The protein belongs to the GatB/GatE family. GatB subfamily. In terms of assembly, heterotrimer of A, B and C subunits.

It carries out the reaction L-glutamyl-tRNA(Gln) + L-glutamine + ATP + H2O = L-glutaminyl-tRNA(Gln) + L-glutamate + ADP + phosphate + H(+). It catalyses the reaction L-aspartyl-tRNA(Asn) + L-glutamine + ATP + H2O = L-asparaginyl-tRNA(Asn) + L-glutamate + ADP + phosphate + 2 H(+). In terms of biological role, allows the formation of correctly charged Asn-tRNA(Asn) or Gln-tRNA(Gln) through the transamidation of misacylated Asp-tRNA(Asn) or Glu-tRNA(Gln) in organisms which lack either or both of asparaginyl-tRNA or glutaminyl-tRNA synthetases. The reaction takes place in the presence of glutamine and ATP through an activated phospho-Asp-tRNA(Asn) or phospho-Glu-tRNA(Gln). In Alkalilimnicola ehrlichii (strain ATCC BAA-1101 / DSM 17681 / MLHE-1), this protein is Aspartyl/glutamyl-tRNA(Asn/Gln) amidotransferase subunit B.